The sequence spans 208 residues: Thymidylate kinase (208 aa).

10–17 contacts ATP; it reads GPEGSGKS.

Belongs to the thymidylate kinase family.

The catalysed reaction is dTMP + ATP = dTDP + ADP. Its function is as follows. Phosphorylation of dTMP to form dTDP in both de novo and salvage pathways of dTTP synthesis. The polypeptide is Thymidylate kinase (Bacillus cytotoxicus (strain DSM 22905 / CIP 110041 / 391-98 / NVH 391-98)).